A 285-amino-acid chain; its full sequence is MPKMAAEKNSKPAKKAKLGQNFLSDASGALKIVEALGDISDATVVEIGPGRGAITDHLAKRAKRLIAVEIDRVLAAQLRLRYSRLENVEILEADILAVELSTVLAQRIGPLRDLRPTKPEKVRIIGNLPYYITSDILLRLFEAHALIDFAVIMVQKEVADRIAAKPGTRDYGLLSATSQLYTHVEKLFTLPPGSFNPAPQVHSTVLKLQMEPKLEALGVDEEGFDSFLKLIFGQKRKTLFNNLRVAYDMAKAREAMKAVGLKSDVRAEAVALEKTAQLYNELRKG.

S-adenosyl-L-methionine is bound by residues asparagine 21, leucine 23, glycine 48, glutamate 69, aspartate 94, and asparagine 127.

Belongs to the class I-like SAM-binding methyltransferase superfamily. rRNA adenine N(6)-methyltransferase family. RsmA subfamily.

It is found in the cytoplasm. The catalysed reaction is adenosine(1518)/adenosine(1519) in 16S rRNA + 4 S-adenosyl-L-methionine = N(6)-dimethyladenosine(1518)/N(6)-dimethyladenosine(1519) in 16S rRNA + 4 S-adenosyl-L-homocysteine + 4 H(+). In terms of biological role, specifically dimethylates two adjacent adenosines (A1518 and A1519) in the loop of a conserved hairpin near the 3'-end of 16S rRNA in the 30S particle. May play a critical role in biogenesis of 30S subunits. This Koribacter versatilis (strain Ellin345) protein is Ribosomal RNA small subunit methyltransferase A.